The chain runs to 739 residues: G2 and S phase-expressed protein 1 (739 aa).

The segment covering 1–11 (MEGGGGRDEPS) has biased composition (basic and acidic residues). The interval 1–20 (MEGGGGRDEPSACRAGDVNM) is disordered. Ser-91 is subject to Phosphoserine. 3 disordered regions span residues 116–136 (SRNQAAQAAKPEDPRSQGVER), 149–306 (EKEK…AIPV), and 320–639 (PGST…GDAA). The segment covering 149–165 (EKEKEMKKSPTSLKRET) has biased composition (basic and acidic residues). At Ser-157 the chain carries Phosphoserine. The residue at position 159 (Thr-159) is a Phosphothreonine. Phosphoserine occurs at positions 171, 187, 208, 247, and 262. The span at 181-195 (PRLLASSPALPSSGA) shows a compositional bias: low complexity. Positions 268–280 (IPAEKESHRDVLP) are enriched in basic and acidic residues. 2 stretches are compositionally biased toward low complexity: residues 284 to 294 (APGAVNVPAAG) and 330 to 342 (SSSGPVWSGASSA). Ser-331 carries the post-translational modification Phosphoserine. The span at 360 to 372 (PANSSRPLSNISK) shows a compositional bias: polar residues. Low complexity predominate over residues 411-424 (TAPPSASPTQPQTP). Polar residues-rich tracts occupy residues 430–446 (WLNSSCAWSESSQLNKT) and 455–470 (CLNSKTKVMPTPTNQF). Ser-480 is subject to Phosphoserine. Positions 481 to 522 (PDSSTPKLSRAQRPQSCTSVGRVTVHSTPVRRSSGPAPQSLL) are enriched in polar residues. A Phosphothreonine modification is found at Thr-485. Ser-496, Ser-499, Ser-514, Ser-520, Ser-523, and Ser-528 each carry phosphoserine. At Thr-532 the chain carries Phosphothreonine. 2 positions are modified to phosphoserine: Ser-535 and Ser-555. Over residues 577 to 590 (EPTRESNRKTDSRL) the composition is skewed to basic and acidic residues. Ser-594 and Ser-611 each carry phosphoserine. Thr-696 bears the Phosphothreonine mark. Ser-707, Ser-717, Ser-718, Ser-724, and Ser-734 each carry phosphoserine.

In terms of processing, phosphorylated in mitosis.

Its subcellular location is the cytoplasm. It localises to the cytoskeleton. May be involved in p53-induced cell cycle arrest in G2/M phase by interfering with microtubule rearrangements that are required to enter mitosis. Overexpression delays G2/M phase progression. The protein is G2 and S phase-expressed protein 1 of Homo sapiens (Human).